Here is a 585-residue protein sequence, read N- to C-terminus: Arginine--tRNA ligase (585 aa).

Positions Ala131 to His141 match the 'HIGH' region motif.

The protein belongs to the class-I aminoacyl-tRNA synthetase family. Monomer.

It localises to the cytoplasm. The enzyme catalyses tRNA(Arg) + L-arginine + ATP = L-arginyl-tRNA(Arg) + AMP + diphosphate. In Sinorhizobium medicae (strain WSM419) (Ensifer medicae), this protein is Arginine--tRNA ligase.